The chain runs to 65 residues: Cecropin (65 aa).

The first 23 residues, 1-23 (MNFVKVLFFISACILIMLSAVSG), serve as a signal peptide directing secretion.

Belongs to the cecropin family.

It localises to the secreted. In terms of biological role, has antibacterial activity. The chain is Cecropin (LOC113514368) from Galleria mellonella (Greater wax moth).